Consider the following 135-residue polypeptide: Small ribosomal subunit protein uS11 (135 aa).

This sequence belongs to the universal ribosomal protein uS11 family. As to quaternary structure, part of the 30S ribosomal subunit. Interacts with proteins S7 and S18. Binds to IF-3.

In terms of biological role, located on the platform of the 30S subunit, it bridges several disparate RNA helices of the 16S rRNA. Forms part of the Shine-Dalgarno cleft in the 70S ribosome. This is Small ribosomal subunit protein uS11 from Solibacter usitatus (strain Ellin6076).